We begin with the raw amino-acid sequence, 358 residues long: Insulin gene enhancer protein ISL-2A (358 aa).

LIM zinc-binding domains lie at 27-80 (CVGC…CKRD) and 89-143 (CANC…RADH). A DNA-binding region (homeobox) is located at residues 190–249 (TTRVRTVLNEKQLHTLRTCYNANPRPDALMKEQLVEMTGLSPRVIRVWFQNKRCKDKKRS). Positions 325-335 (ESGSMGNSSGS) are enriched in low complexity. A disordered region spans residues 325-358 (ESGSMGNSSGSDVTSLSSQLPDTPNSMVASPVDT). The span at 336-358 (DVTSLSSQLPDTPNSMVASPVDT) shows a compositional bias: polar residues.

It is found in the nucleus. Its function is as follows. Binds to one of the cis-acting domain of the insulin gene enhancer. May be involved in subtype specialization of primary motoneurons. The chain is Insulin gene enhancer protein ISL-2A (isl2a) from Oncorhynchus tshawytscha (Chinook salmon).